We begin with the raw amino-acid sequence, 170 residues long: Putative 4-hydroxy-4-methyl-2-oxoglutarate aldolase (170 aa).

Residues 85-88 (GDMI) and Arg-107 contribute to the substrate site. Asp-108 serves as a coordination point for a divalent metal cation.

It belongs to the class II aldolase/RraA-like family. In terms of assembly, homotrimer. The cofactor is a divalent metal cation.

It carries out the reaction 4-hydroxy-4-methyl-2-oxoglutarate = 2 pyruvate. The enzyme catalyses oxaloacetate + H(+) = pyruvate + CO2. Functionally, catalyzes the aldol cleavage of 4-hydroxy-4-methyl-2-oxoglutarate (HMG) into 2 molecules of pyruvate. Also contains a secondary oxaloacetate (OAA) decarboxylase activity due to the common pyruvate enolate transition state formed following C-C bond cleavage in the retro-aldol and decarboxylation reactions. The protein is Putative 4-hydroxy-4-methyl-2-oxoglutarate aldolase of Acinetobacter baylyi (strain ATCC 33305 / BD413 / ADP1).